Here is a 299-residue protein sequence, read N- to C-terminus: N-acetylneuraminate lyase (299 aa).

Aceneuramate is bound by residues Ser45 and Ser46. The active-site Proton donor is Tyr134. Residue Lys161 is the Schiff-base intermediate with substrate of the active site. Residues Thr163, Gly185, Asp187, and Glu188 each contribute to the aceneuramate site.

The protein belongs to the DapA family. NanA subfamily. In terms of assembly, homotetramer.

It localises to the cytoplasm. The enzyme catalyses aceneuramate = aldehydo-N-acetyl-D-mannosamine + pyruvate. Its pathway is amino-sugar metabolism; N-acetylneuraminate degradation; D-fructose 6-phosphate from N-acetylneuraminate: step 1/5. Functionally, catalyzes the reversible aldol cleavage of N-acetylneuraminic acid (sialic acid; Neu5Ac) to form pyruvate and N-acetylmannosamine (ManNAc) via a Schiff base intermediate. This is N-acetylneuraminate lyase from Rhizobium meliloti (strain 1021) (Ensifer meliloti).